The chain runs to 159 residues: Protein Smg homolog (159 aa).

Belongs to the Smg family.

The chain is Protein Smg homolog from Vibrio vulnificus (strain CMCP6).